The sequence spans 321 residues: Nodulation protein D 1 (321 aa).

The region spanning 6–63 (LDLNLLVALDALMTERKLTAAARSINLSQPAMSAAITRLRTYFRDELFTMNGRELVPT) is the HTH lysR-type domain. The segment at residues 23–42 (LTAAARSINLSQPAMSAAIT) is a DNA-binding region (H-T-H motif).

The protein belongs to the LysR transcriptional regulatory family.

Functionally, nodD regulates the expression of the nodABCFE genes which encode other nodulation proteins. NodD is also a negative regulator of its own expression. Binds flavonoids as inducers. The polypeptide is Nodulation protein D 1 (nodD1) (Bradyrhizobium japonicum).